A 192-amino-acid chain; its full sequence is Ribosomal RNA small subunit methyltransferase G (192 aa).

S-adenosyl-L-methionine is bound by residues glycine 63, phenylalanine 68, 112 to 113 (IE), and arginine 125.

It belongs to the methyltransferase superfamily. RNA methyltransferase RsmG family.

Its subcellular location is the cytoplasm. It catalyses the reaction guanosine(527) in 16S rRNA + S-adenosyl-L-methionine = N(7)-methylguanosine(527) in 16S rRNA + S-adenosyl-L-homocysteine. Its function is as follows. Specifically methylates the N7 position of guanine in position 527 of 16S rRNA. The protein is Ribosomal RNA small subunit methyltransferase G of Rickettsia bellii (strain OSU 85-389).